A 590-amino-acid chain; its full sequence is Aspartate--tRNA(Asp/Asn) ligase (590 aa).

Glu175 contacts L-aspartate. Residues 199-202 are aspartate; sequence QQYK. The L-aspartate site is built by Arg221 and His450. 221-223 is a binding site for ATP; that stretch reads RDE. Glu484 is an ATP binding site. L-aspartate is bound at residue Arg491. 536–539 lines the ATP pocket; it reads GVDR.

Belongs to the class-II aminoacyl-tRNA synthetase family. Type 1 subfamily. In terms of assembly, homodimer.

It localises to the cytoplasm. The enzyme catalyses tRNA(Asx) + L-aspartate + ATP = L-aspartyl-tRNA(Asx) + AMP + diphosphate. Functionally, aspartyl-tRNA synthetase with relaxed tRNA specificity since it is able to aspartylate not only its cognate tRNA(Asp) but also tRNA(Asn). Reaction proceeds in two steps: L-aspartate is first activated by ATP to form Asp-AMP and then transferred to the acceptor end of tRNA(Asp/Asn). The polypeptide is Aspartate--tRNA(Asp/Asn) ligase (Bradyrhizobium sp. (strain BTAi1 / ATCC BAA-1182)).